The primary structure comprises 264 residues: uncharacterized protein (264 aa).

Residues His7, His9, Glu102, His138, His163, and Asp213 each coordinate a divalent metal cation.

This sequence belongs to the metallo-dependent hydrolases superfamily. TatD-type hydrolase family. The cofactor is a divalent metal cation.

This is an uncharacterized protein from Buchnera aphidicola subsp. Acyrthosiphon pisum (strain APS) (Acyrthosiphon pisum symbiotic bacterium).